The primary structure comprises 123 residues: Putative membrane protein insertion efficiency factor (123 aa).

Residues 1 to 23 (MGSCGGKHTGKGAPKPYSRNFTD) form a disordered region.

It belongs to the UPF0161 family.

It is found in the cell inner membrane. In terms of biological role, could be involved in insertion of integral membrane proteins into the membrane. This chain is Putative membrane protein insertion efficiency factor, found in Brucella abortus (strain 2308).